A 232-amino-acid polypeptide reads, in one-letter code: Floral homeotic protein APETALA 3 (232 aa).

An MADS-box domain is found at 3 to 57 (RGKIQIKRIENQTNRQVTYSKRRNGLFKKAHELTVLCDARVSIIMFSSSNKLHEY). Residues 75–164 (SDVDVWATQY…KSQQDIQKNL (90 aa)) are a coiled coil. Residues 84 to 174 (YERMQETKRK…IHELELRAED (91 aa)) form the K-box domain.

Forms a heterodimer with PISTILLATA, capable of binding to CArG-box sequences. AP3/PI heterodimer binds AP1 or SEP3 to form complexes. In terms of tissue distribution, expressed in petals and stamens.

It is found in the nucleus. Probable transcription factor involved in the genetic control of flower development. Is required for normal development of petals and stamens in the wild-type flower. Forms a heterodimer with PISTILLATA that is required for autoregulation of both AP3 and PI genes. AP3/PI heterodimer interacts with APETALA1 or SEPALLATA3 to form a ternary complex that could be responsible for the regulation of the genes involved in the flower development. AP3/PI heterodimer activates the expression of NAP. AP3/PI prevents GATA22/GNL and GATA21/GNC expression. The protein is Floral homeotic protein APETALA 3 (AP3) of Arabidopsis thaliana (Mouse-ear cress).